We begin with the raw amino-acid sequence, 417 residues long: E3 ubiquitin-protein ligase RNF135 (417 aa).

The RING-type zinc finger occupies 21 to 67 (CIICQGLLDQPTTLPCGHSFCLRCLHDLWVSKRGAVDGCPWACPICR). Disordered stretches follow at residues 95–118 (EVEAGSEPEPAPAPRSAPQVTVQK) and 143–173 (TQRPNLGSGQDNAQGTPPTDSSSEGEHSLDS). 2 coiled-coil regions span residues 121 to 145 (TNVIQELTDMVRQLVDDVKSLQTQR) and 180 to 204 (SISQKKIQEILHNLEEIQEKLQGSV). Over residues 143–164 (TQRPNLGSGQDNAQGTPPTDSS) the composition is skewed to polar residues. The region spanning 225–417 (PDQRRPAPRK…NYLEIKQLNT (193 aa)) is the B30.2/SPRY domain.

Homodimer. Interacts (homodimer) with RIGI (double-stranded RNA-bound oligomeric form); involved in both RIGI ubiquitination, oligomerization into filaments associated with viral RNAs and the bridging of these filaments. Interacts with UBE2D3 and UBE2N; E2 ubiquitin ligases involved in RNF135-mediated ubiquitination of RIGI and activation of the RIG-I signaling pathway. Interacts with PCBP2. As to expression, ubiquitously expressed.

It is found in the cytoplasm. Its subcellular location is the stress granule. The enzyme catalyses S-ubiquitinyl-[E2 ubiquitin-conjugating enzyme]-L-cysteine + [acceptor protein]-L-lysine = [E2 ubiquitin-conjugating enzyme]-L-cysteine + N(6)-ubiquitinyl-[acceptor protein]-L-lysine.. The protein operates within protein modification; protein ubiquitination. In terms of biological role, E2-dependent E3 ubiquitin-protein ligase that functions as a RIGI coreceptor in the sensing of viral RNAs in cell cytoplasm and the activation of the antiviral innate immune response. Together with the UBE2D3, UBE2N and UB2V1 E2 ligases, catalyzes the 'Lys-63'-linked polyubiquitination of RIGI oligomerized on viral RNAs, an essential step in the activation of the RIG-I signaling pathway. Through a ubiquitin-independent parallel mechanism, which consists in bridging RIGI filaments forming on longer viral RNAs, further activates the RIG-I signaling pathway. This second mechanism that synergizes with the ubiquitin-dependent one would thereby allow an RNA length-dependent regulation of the RIG-I signaling pathway. Associated with the E2 ligase UBE2N, also constitutively synthesizes unanchored 'Lys-63'-linked polyubiquitin chains that may also activate the RIG-I signaling pathway. It is not involved in the innate immune response against DNA viruses. The protein is E3 ubiquitin-protein ligase RNF135 of Mus musculus (Mouse).